We begin with the raw amino-acid sequence, 191 residues long: Lipid A acyltransferase PagP (191 aa).

The signal sequence occupies residues 1 to 26 (MLKVNKYVILIIAFVSQMMFSTTAQA). Residues histidine 63, aspartate 106, and serine 107 contribute to the active site.

This sequence belongs to the lipid A palmitoyltransferase family. As to quaternary structure, homodimer.

Its subcellular location is the cell outer membrane. The catalysed reaction is a lipid A + a 1,2-diacyl-sn-glycero-3-phosphocholine = a hepta-acyl lipid A + a 2-acyl-sn-glycero-3-phosphocholine. It carries out the reaction a lipid IVA + a 1,2-diacyl-sn-glycero-3-phosphocholine = a lipid IVB + a 2-acyl-sn-glycero-3-phosphocholine. The enzyme catalyses a lipid IIA + a 1,2-diacyl-sn-glycero-3-phosphocholine = a lipid IIB + a 2-acyl-sn-glycero-3-phosphocholine. Its function is as follows. Transfers a fatty acid residue from the sn-1 position of a phospholipid to the N-linked hydroxyfatty acid chain on the proximal unit of lipid A or its precursors. The chain is Lipid A acyltransferase PagP from Enterobacter lignolyticus (strain SCF1).